The sequence spans 895 residues: DNA double-strand break repair Rad50 ATPase (895 aa).

ATP contacts are provided by residues 32 to 38 (NGAGKSS) and glutamine 137. The stretch at 183 to 253 (SDYDYLKNEL…LNAQLETIKK (71 aa)) forms a coiled coil. In terms of domain architecture, Zinc-hook spans 411–507 (RAEINSSLMQ…ERKHQKKLLD (97 aa)). Positions 455 and 458 each coordinate Zn(2+). 2 coiled-coil regions span residues 464 to 510 (TEKS…DRIN) and 618 to 647 (ENSL…AMDE).

Belongs to the SMC family. RAD50 subfamily. In terms of assembly, homodimer. Forms a heterotetramer composed of two Mre11 subunits and two Rad50 subunits. It depends on Zn(2+) as a cofactor.

Part of the Rad50/Mre11 complex, which is involved in the early steps of DNA double-strand break (DSB) repair. The complex may facilitate opening of the processed DNA ends to aid in the recruitment of HerA and NurA. Rad50 controls the balance between DNA end bridging and DNA resection via ATP-dependent structural rearrangements of the Rad50/Mre11 complex. In Thermoplasma volcanium (strain ATCC 51530 / DSM 4299 / JCM 9571 / NBRC 15438 / GSS1), this protein is DNA double-strand break repair Rad50 ATPase.